The chain runs to 270 residues: Putative phosphoenolpyruvate synthase regulatory protein (270 aa).

150-157 (GVSRCGKT) serves as a coordination point for ADP.

This sequence belongs to the pyruvate, phosphate/water dikinase regulatory protein family. PSRP subfamily.

The enzyme catalyses [pyruvate, water dikinase] + ADP = [pyruvate, water dikinase]-phosphate + AMP + H(+). The catalysed reaction is [pyruvate, water dikinase]-phosphate + phosphate + H(+) = [pyruvate, water dikinase] + diphosphate. In terms of biological role, bifunctional serine/threonine kinase and phosphorylase involved in the regulation of the phosphoenolpyruvate synthase (PEPS) by catalyzing its phosphorylation/dephosphorylation. This Shewanella pealeana (strain ATCC 700345 / ANG-SQ1) protein is Putative phosphoenolpyruvate synthase regulatory protein.